The chain runs to 274 residues: Thiamine kinase (274 aa).

It belongs to the thiamine kinase family.

The catalysed reaction is thiamine + ATP = thiamine phosphate + ADP + H(+). The protein operates within cofactor biosynthesis; thiamine diphosphate biosynthesis; thiamine phosphate from thiamine: step 1/1. Its function is as follows. Catalyzes the ATP-dependent phosphorylation of thiamine to thiamine phosphate. Is involved in thiamine salvage. The polypeptide is Thiamine kinase (Shigella boydii serotype 4 (strain Sb227)).